The primary structure comprises 513 residues: Probable histone deacetylase 19 (513 aa).

The histone deacetylase stretch occupies residues 23-334 (RRVCYFYDPD…WCYETGVALG (312 aa)). H154 serves as the catalytic Proton donor/acceptor. Zn(2+) contacts are provided by D189, H191, and D277. Disordered regions lie at residues 384–432 (HAPS…ESSR) and 446–513 (ENAT…YHKP). Positions 398-409 (EIPEQDEDQDDP) are enriched in acidic residues. Over residues 410-432 (DERHDPDSDMEVDDHKAVEESSR) the composition is skewed to basic and acidic residues. The segment covering 492 to 504 (NVKNEPESSTKLQ) has biased composition (polar residues).

This sequence belongs to the histone deacetylase family. HD type 1 subfamily. The cofactor is Zn(2+).

It is found in the nucleus. The catalysed reaction is N(6)-acetyl-L-lysyl-[histone] + H2O = L-lysyl-[histone] + acetate. Responsible for the deacetylation of lysine residues on the N-terminal part of the core histones (H2A, H2B, H3 and H4). Histone deacetylation gives a tag for epigenetic repression and plays an important role in transcriptional regulation, cell cycle progression and developmental events. Histone deacetylases act via the formation of large multiprotein complexes. This is Probable histone deacetylase 19 from Zea mays (Maize).